The following is a 198-amino-acid chain: FMN-dependent NADH:quinone oxidoreductase (198 aa).

Residues Ser-10, 16–18 (SQS), 94–97 (MYNF), and 138–141 (TRGG) each bind FMN.

It belongs to the azoreductase type 1 family. In terms of assembly, homodimer. The cofactor is FMN.

The enzyme catalyses 2 a quinone + NADH + H(+) = 2 a 1,4-benzosemiquinone + NAD(+). It catalyses the reaction N,N-dimethyl-1,4-phenylenediamine + anthranilate + 2 NAD(+) = 2-(4-dimethylaminophenyl)diazenylbenzoate + 2 NADH + 2 H(+). Quinone reductase that provides resistance to thiol-specific stress caused by electrophilic quinones. In terms of biological role, also exhibits azoreductase activity. Catalyzes the reductive cleavage of the azo bond in aromatic azo compounds to the corresponding amines. In Shewanella baltica (strain OS185), this protein is FMN-dependent NADH:quinone oxidoreductase.